The sequence spans 491 residues: Probable glycine dehydrogenase (decarboxylating) subunit 2 (491 aa).

Lysine 273 is subject to N6-(pyridoxal phosphate)lysine.

Belongs to the GcvP family. C-terminal subunit subfamily. As to quaternary structure, the glycine cleavage system is composed of four proteins: P, T, L and H. In this organism, the P 'protein' is a heterodimer of two subunits. It depends on pyridoxal 5'-phosphate as a cofactor.

The enzyme catalyses N(6)-[(R)-lipoyl]-L-lysyl-[glycine-cleavage complex H protein] + glycine + H(+) = N(6)-[(R)-S(8)-aminomethyldihydrolipoyl]-L-lysyl-[glycine-cleavage complex H protein] + CO2. Functionally, the glycine cleavage system catalyzes the degradation of glycine. The P protein binds the alpha-amino group of glycine through its pyridoxal phosphate cofactor; CO(2) is released and the remaining methylamine moiety is then transferred to the lipoamide cofactor of the H protein. This chain is Probable glycine dehydrogenase (decarboxylating) subunit 2, found in Bacillus thuringiensis (strain Al Hakam).